The primary structure comprises 339 residues: DNA-directed RNA polymerase subunit alpha (339 aa).

Positions 1–233 (MVREEVAGST…DLFLPFLHAE (233 aa)) are alpha N-terminal domain (alpha-NTD). The interval 264-339 (KKGIPLNCIF…IDLLKNKLSF (76 aa)) is alpha C-terminal domain (alpha-CTD).

It belongs to the RNA polymerase alpha chain family. In terms of assembly, in plastids the minimal PEP RNA polymerase catalytic core is composed of four subunits: alpha, beta, beta', and beta''. When a (nuclear-encoded) sigma factor is associated with the core the holoenzyme is formed, which can initiate transcription.

It localises to the plastid. It is found in the chloroplast. It catalyses the reaction RNA(n) + a ribonucleoside 5'-triphosphate = RNA(n+1) + diphosphate. Functionally, DNA-dependent RNA polymerase catalyzes the transcription of DNA into RNA using the four ribonucleoside triphosphates as substrates. The polypeptide is DNA-directed RNA polymerase subunit alpha (Australopyrum velutinum (Mountain wheat-grass)).